We begin with the raw amino-acid sequence, 83 residues long: MSGNTGERPFGDIITSIRYWVIHSITIPSLFIAGWLFVSTGLAYDVFGSPRPNEYFTESRQEVPLITGRFNSLDQLDEFTRSL.

A helical transmembrane segment spans residues 21 to 35 (VIHSITIPSLFIAGW). Histidine 23 provides a ligand contact to heme.

This sequence belongs to the PsbE/PsbF family. In terms of assembly, heterodimer of an alpha subunit and a beta subunit. PSII is composed of 1 copy each of membrane proteins PsbA, PsbB, PsbC, PsbD, PsbE, PsbF, PsbH, PsbI, PsbJ, PsbK, PsbL, PsbM, PsbT, PsbX, PsbY, PsbZ, Psb30/Ycf12, at least 3 peripheral proteins of the oxygen-evolving complex and a large number of cofactors. It forms dimeric complexes. The cofactor is heme b.

Its subcellular location is the plastid. The protein localises to the chloroplast thylakoid membrane. This b-type cytochrome is tightly associated with the reaction center of photosystem II (PSII). PSII is a light-driven water:plastoquinone oxidoreductase that uses light energy to abstract electrons from H(2)O, generating O(2) and a proton gradient subsequently used for ATP formation. It consists of a core antenna complex that captures photons, and an electron transfer chain that converts photonic excitation into a charge separation. This chain is Cytochrome b559 subunit alpha, found in Staurastrum punctulatum (Green alga).